A 147-amino-acid chain; its full sequence is UPF0306 protein YE0465 (147 aa).

This sequence belongs to the UPF0306 family.

The polypeptide is UPF0306 protein YE0465 (Yersinia enterocolitica serotype O:8 / biotype 1B (strain NCTC 13174 / 8081)).